Here is a 465-residue protein sequence, read N- to C-terminus: Siroheme synthase (465 aa).

The interval 1-203 (MDFLPLFHSL…GRPAEAERLL (203 aa)) is precorrin-2 dehydrogenase /sirohydrochlorin ferrochelatase. Residues 22 to 23 (EV) and 43 to 44 (PQ) each bind NAD(+). A Phosphoserine modification is found at Ser128. The segment at 217–465 (GEVYLVGAGP…AWFEGAREGA (249 aa)) is uroporphyrinogen-III C-methyltransferase. Pro226 lines the S-adenosyl-L-methionine pocket. Catalysis depends on Asp249, which acts as the Proton acceptor. Lys271 (proton donor) is an active-site residue. S-adenosyl-L-methionine is bound by residues 302-304 (GGD), Ile307, 332-333 (TA), Met384, and Gly413.

It in the N-terminal section; belongs to the precorrin-2 dehydrogenase / sirohydrochlorin ferrochelatase family. The protein in the C-terminal section; belongs to the precorrin methyltransferase family.

It catalyses the reaction uroporphyrinogen III + 2 S-adenosyl-L-methionine = precorrin-2 + 2 S-adenosyl-L-homocysteine + H(+). The enzyme catalyses precorrin-2 + NAD(+) = sirohydrochlorin + NADH + 2 H(+). It carries out the reaction siroheme + 2 H(+) = sirohydrochlorin + Fe(2+). It participates in cofactor biosynthesis; adenosylcobalamin biosynthesis; precorrin-2 from uroporphyrinogen III: step 1/1. Its pathway is cofactor biosynthesis; adenosylcobalamin biosynthesis; sirohydrochlorin from precorrin-2: step 1/1. It functions in the pathway porphyrin-containing compound metabolism; siroheme biosynthesis; precorrin-2 from uroporphyrinogen III: step 1/1. The protein operates within porphyrin-containing compound metabolism; siroheme biosynthesis; siroheme from sirohydrochlorin: step 1/1. It participates in porphyrin-containing compound metabolism; siroheme biosynthesis; sirohydrochlorin from precorrin-2: step 1/1. In terms of biological role, multifunctional enzyme that catalyzes the SAM-dependent methylations of uroporphyrinogen III at position C-2 and C-7 to form precorrin-2 via precorrin-1. Then it catalyzes the NAD-dependent ring dehydrogenation of precorrin-2 to yield sirohydrochlorin. Finally, it catalyzes the ferrochelation of sirohydrochlorin to yield siroheme. The chain is Siroheme synthase from Pseudomonas paraeruginosa (strain DSM 24068 / PA7) (Pseudomonas aeruginosa (strain PA7)).